The sequence spans 203 residues: Guanylate kinase (203 aa).

The region spanning 3 to 181 (GTLYIVAAPS…AVSEMCAIFT (179 aa)) is the Guanylate kinase-like domain. 10–17 (APSGAGKS) is a binding site for ATP.

Belongs to the guanylate kinase family.

The protein resides in the cytoplasm. It catalyses the reaction GMP + ATP = GDP + ADP. Functionally, essential for recycling GMP and indirectly, cGMP. In Xanthomonas axonopodis pv. citri (strain 306), this protein is Guanylate kinase.